A 131-amino-acid polypeptide reads, in one-letter code: Fumarate reductase subunit C (131 aa).

2 helical membrane-spanning segments follow: residues 60–80 (FVGF…LAAA) and 110–130 (IKGL…VALF).

The protein belongs to the FrdC family. In terms of assembly, part of an enzyme complex containing four subunits: a flavoprotein (FrdA), an iron-sulfur protein (FrdB), and two hydrophobic anchor proteins (FrdC and FrdD).

It is found in the cell inner membrane. Functionally, two distinct, membrane-bound, FAD-containing enzymes are responsible for the catalysis of fumarate and succinate interconversion; fumarate reductase is used in anaerobic growth, and succinate dehydrogenase is used in aerobic growth. Anchors the catalytic components of the fumarate reductase complex to the cell inner membrane, binds quinones. The protein is Fumarate reductase subunit C of Enterobacter sp. (strain 638).